A 62-amino-acid chain; its full sequence is DNA-binding protein 7 (62 aa).

It belongs to the 7 kDa DNA-binding/endoribonuclease P2 family. As to quaternary structure, monomer.

It is found in the cytoplasm. In terms of biological role, can constrain negative DNA supercoils. May be involved in maintaining the integrity of the genome at high temperature. The polypeptide is DNA-binding protein 7 (Metallosphaera sedula (strain ATCC 51363 / DSM 5348 / JCM 9185 / NBRC 15509 / TH2)).